Reading from the N-terminus, the 414-residue chain is Nuclear hormone receptor family member nhr-213 (414 aa).

The nuclear receptor DNA-binding region spans isoleucine 21–phenylalanine 99. 2 NR C4-type zinc fingers span residues cysteine 24–cysteine 44 and cysteine 62–cysteine 82. The region spanning serine 162 to cysteine 414 is the NR LBD domain.

This sequence belongs to the nuclear hormone receptor family.

It localises to the nucleus. In terms of biological role, orphan nuclear receptor. This chain is Nuclear hormone receptor family member nhr-213 (nhr-213), found in Caenorhabditis elegans.